The primary structure comprises 373 residues: Flagellar P-ring protein 1 (373 aa).

Positions 1 to 24 (MRGISRLYWSLVLICFAFAPIVEA) are cleaved as a signal peptide.

It belongs to the FlgI family. The basal body constitutes a major portion of the flagellar organelle and consists of four rings (L,P,S, and M) mounted on a central rod.

The protein localises to the periplasm. It localises to the bacterial flagellum basal body. In terms of biological role, assembles around the rod to form the L-ring and probably protects the motor/basal body from shearing forces during rotation. The chain is Flagellar P-ring protein 1 from Hahella chejuensis (strain KCTC 2396).